The primary structure comprises 105 residues: Dynein axonemal light chain 4 (105 aa).

It belongs to the dynein light chain family. Consists of at least two heavy chains and a number of intermediate and light chains.

The protein localises to the cytoplasm. The protein resides in the cytoskeleton. It localises to the cilium axoneme. Functionally, force generating protein of respiratory cilia. Produces force towards the minus ends of microtubules. Dynein has ATPase activity. The chain is Dynein axonemal light chain 4 (Dnal4) from Mus musculus (Mouse).